The chain runs to 370 residues: Putative 8-amino-7-oxononanoate synthase (370 aa).

R20 is a binding site for substrate. 95 to 96 serves as a coordination point for pyridoxal 5'-phosphate; that stretch reads GY. H120 provides a ligand contact to substrate. Pyridoxal 5'-phosphate is bound by residues S167, 192-195, and 223-226; these read DDAH and TLSK. K226 bears the N6-(pyridoxal phosphate)lysine mark. T337 serves as a coordination point for substrate.

It belongs to the class-II pyridoxal-phosphate-dependent aminotransferase family. BioF subfamily. In terms of assembly, homodimer. The cofactor is pyridoxal 5'-phosphate.

The enzyme catalyses 6-carboxyhexanoyl-[ACP] + L-alanine + H(+) = (8S)-8-amino-7-oxononanoate + holo-[ACP] + CO2. The protein operates within cofactor biosynthesis; biotin biosynthesis. In terms of biological role, catalyzes the decarboxylative condensation of pimeloyl-[acyl-carrier protein] and L-alanine to produce 8-amino-7-oxononanoate (AON), [acyl-carrier protein], and carbon dioxide. This is Putative 8-amino-7-oxononanoate synthase (bioF) from Methanococcus vannielii (strain ATCC 35089 / DSM 1224 / JCM 13029 / OCM 148 / SB).